The following is a 368-amino-acid chain: Geranylgeranyl pyrophosphate synthase dpfgD (368 aa).

The isopentenyl diphosphate site is built by Lys48, Arg51, and His80. The Mg(2+) site is built by Asp87 and Asp91. Arg96 contacts dimethylallyl diphosphate. Arg97 is an isopentenyl diphosphate binding site. Lys174, Thr175, and Gln208 together coordinate dimethylallyl diphosphate. Asp211 lines the Mg(2+) pocket. Dimethylallyl diphosphate contacts are provided by Asn215, Lys225, and Lys235.

It belongs to the FPP/GGPP synthase family. Mg(2+) serves as cofactor.

It carries out the reaction isopentenyl diphosphate + dimethylallyl diphosphate = (2E)-geranyl diphosphate + diphosphate. The enzyme catalyses isopentenyl diphosphate + (2E)-geranyl diphosphate = (2E,6E)-farnesyl diphosphate + diphosphate. It catalyses the reaction isopentenyl diphosphate + (2E,6E)-farnesyl diphosphate = (2E,6E,10E)-geranylgeranyl diphosphate + diphosphate. It functions in the pathway secondary metabolite biosynthesis; terpenoid biosynthesis. Its function is as follows. Geranylgeranyl pyrophosphate synthase; part of the gene cluster that mediates the biosynthesis of diterpenoid pyrones. The first step of the pathway is the synthesis of the alpha-pyrone moiety by the polyketide synthase dpfgA via condensation of one acetyl-CoA starter unit with 3 malonyl-CoA units and 2 methylations. The alpha-pyrone is then combined with geranylgeranyl pyrophosphate (GGPP) formed by the GGPP synthase dpfgD through the action of the prenyltransferase dpfgC to yield a linear alpha-pyrone diterpenoid. Subsequent steps in the diterpenoid pyrone biosynthetic pathway involve the decalin core formation, which is initiated by the epoxidation of the C10-C11 olefin by the FAD-dependent oxidoreductase dpfgE, and is followed by a cyclization cascade catalyzed by the terpene cyclase dpfgB. The short chain dehydrogenase/reductase dpfgG then oxidizes the 8S hydroxy group to a ketone and the short chain dehydrogenase/reductase dpfgH reduces the ketone to the 8R hydroxy group to yield higginsianin B. Higginsianin B is further methylated by the methyltransferase dpfgI to produce the intermediate named FDDP B. The cytochrome P450 monooxygenase dfgpJ then catalyzes a three-step oxidation at C-27 to generate a carboxylic acid as well as C-26 hydroxylation. Finally, methyltransferase dpfgK methylates the carboxylic acid generated by dpfgJ, yielding the final diterpenoid pyrones from the pathway which were named FDDP D and FDDP E. This is Geranylgeranyl pyrophosphate synthase dpfgD from Gibberella zeae (strain ATCC MYA-4620 / CBS 123657 / FGSC 9075 / NRRL 31084 / PH-1) (Wheat head blight fungus).